The primary structure comprises 713 residues: Polyribonucleotide nucleotidyltransferase (713 aa).

Mg(2+) is bound by residues Asp-485 and Asp-491. Positions 552–611 (PRIHTIKINPEKIKDVIGKGGSVIRALTEETGTNIELDDDGTVRISAVANEAAMEAIRRI) constitute a KH domain. Positions 621-689 (NRIYEGKVVR…RQGRVRLSIK (69 aa)) constitute an S1 motif domain.

This sequence belongs to the polyribonucleotide nucleotidyltransferase family. As to quaternary structure, component of the RNA degradosome, which is a multiprotein complex involved in RNA processing and mRNA degradation. Mg(2+) is required as a cofactor.

The protein resides in the cytoplasm. It carries out the reaction RNA(n+1) + phosphate = RNA(n) + a ribonucleoside 5'-diphosphate. Its function is as follows. Involved in mRNA degradation. Catalyzes the phosphorolysis of single-stranded polyribonucleotides processively in the 3'- to 5'-direction. The sequence is that of Polyribonucleotide nucleotidyltransferase from Aeromonas salmonicida (strain A449).